The primary structure comprises 176 residues: MLQLTTYRNLQVFLVIMTAIGMSFALFFLQRYMGFSPCPLCIFQRIGLMIMGGFALIAALFHPKSMVIRLLLWLGSLAGIGWAAIVAGRHVWLQHLPADQVPSCGPGLDYWLDTLPMQQVLKEVFAGSGECASIEWTFLGLSIPEQSLILFSILILTHLLILWRIVRPSTPKPLAR.

The Cytoplasmic segment spans residues 1 to 11; that stretch reads MLQLTTYRNLQ. The chain crosses the membrane as a helical span at residues 12–28; sequence VFLVIMTAIGMSFALFF. The Periplasmic segment spans residues 29–46; sequence LQRYMGFSPCPLCIFQRI. Cysteines 38 and 41 form a disulfide. Residues 47–63 traverse the membrane as a helical segment; that stretch reads GLMIMGGFALIAALFHP. Over 64 to 70 the chain is Cytoplasmic; sequence KSMVIRL. A helical membrane pass occupies residues 71 to 88; sequence LLWLGSLAGIGWAAIVAG. The Periplasmic portion of the chain corresponds to 89 to 145; it reads RHVWLQHLPADQVPSCGPGLDYWLDTLPMQQVLKEVFAGSGECASIEWTFLGLSIPE. Cysteine 104 and cysteine 131 are oxidised to a cystine. The chain crosses the membrane as a helical span at residues 146–164; that stretch reads QSLILFSILILTHLLILWR. Residues 165–176 are Cytoplasmic-facing; that stretch reads IVRPSTPKPLAR.

This sequence belongs to the DsbB family.

It localises to the cell inner membrane. In terms of biological role, required for disulfide bond formation in some periplasmic proteins. Acts by oxidizing the DsbA protein. The sequence is that of Disulfide bond formation protein B from Psychrobacter arcticus (strain DSM 17307 / VKM B-2377 / 273-4).